Reading from the N-terminus, the 60-residue chain is Large ribosomal subunit protein bL32 (60 aa).

Positions 1–60 are disordered; the sequence is MAVQQNKKSRSARDMRRSHDALESNALSVEKSTGEVHLRHHVSPDGFYRGRKVVDKGSDE. A compositionally biased stretch (basic and acidic residues) spans 11 to 22; it reads SARDMRRSHDAL.

Belongs to the bacterial ribosomal protein bL32 family.

The sequence is that of Large ribosomal subunit protein bL32 from Pseudomonas aeruginosa (strain LESB58).